We begin with the raw amino-acid sequence, 226 residues long: 2-C-methyl-D-erythritol 4-phosphate cytidylyltransferase (226 aa).

It belongs to the IspD/TarI cytidylyltransferase family. IspD subfamily.

The enzyme catalyses 2-C-methyl-D-erythritol 4-phosphate + CTP + H(+) = 4-CDP-2-C-methyl-D-erythritol + diphosphate. It functions in the pathway isoprenoid biosynthesis; isopentenyl diphosphate biosynthesis via DXP pathway; isopentenyl diphosphate from 1-deoxy-D-xylulose 5-phosphate: step 2/6. In terms of biological role, catalyzes the formation of 4-diphosphocytidyl-2-C-methyl-D-erythritol from CTP and 2-C-methyl-D-erythritol 4-phosphate (MEP). This is 2-C-methyl-D-erythritol 4-phosphate cytidylyltransferase from Trichodesmium erythraeum (strain IMS101).